We begin with the raw amino-acid sequence, 597 residues long: MQNIRNFSIIAHIDHGKSTLSDRLIQTCGGLSDREMEAQVLDSMDLERERGITIKAQSVTLHYKAKDGETYQLNFIDTPGHVDFSYEVSRSLAACEGALLVVDAGQGVEAQTLANCYTAIEMDLEVVPVLNKIDLPAAEPERVAEEIEDIVGIDAIDAVHCSAKTGFGIENVLEDIVKKIPAPEGDPEAPLQALIIDSWFDNYLGVVSLVRVKNGSIKKGDKIKVMTTGQSYNVDRLGIFTPKQVDTTELKTGEVGWVVCAIKDILGAPVGDTLTHQHHSATEVLPGFKKVKPQVYAGLFPISSDDYEAFRDALGKLSLNDASLFYEPENSTALGFGFRCGFLGLLHMEIIQERLEREYDLDLITTAPTVVYEVLQTNGETIYVDSPSKLPPISNIDEIREPIAECNMLVPQEYLGNIITLCVEKRGIQTNMVYHGNQIALTYEIPMGEVVLDFFDRLKSTSRGYASLDYSFKRFQTADMVRVDIMINSERVDALALIVHKDNAAYRGRELVEKMKELIPRQQFDIAIQAAIGNHIIARSTVKQLRKNVLAKCYGGDVSRKKKLLQKQKEGKKRMKSLGNVEVPQEAFLAILHVGKD.

The tr-type G domain maps to Gln2–Glu184. GTP contacts are provided by residues Asp14 to Thr19 and Asn131 to Asp134.

Belongs to the TRAFAC class translation factor GTPase superfamily. Classic translation factor GTPase family. LepA subfamily.

Its subcellular location is the cell inner membrane. The catalysed reaction is GTP + H2O = GDP + phosphate + H(+). In terms of biological role, required for accurate and efficient protein synthesis under certain stress conditions. May act as a fidelity factor of the translation reaction, by catalyzing a one-codon backward translocation of tRNAs on improperly translocated ribosomes. Back-translocation proceeds from a post-translocation (POST) complex to a pre-translocation (PRE) complex, thus giving elongation factor G a second chance to translocate the tRNAs correctly. Binds to ribosomes in a GTP-dependent manner. The sequence is that of Elongation factor 4 from Haemophilus ducreyi (strain 35000HP / ATCC 700724).